The primary structure comprises 341 residues: Homeobox protein mls-2 (341 aa).

2 disordered regions span residues M1–N78 and S139–S209. The segment covering T64–N78 has biased composition (polar residues). A compositionally biased stretch (basic and acidic residues) spans K153–D166. Residues K201 to A260 constitute a DNA-binding region (homeobox).

It belongs to the HMX homeobox family. As to expression, expressed in a subset of head neurons, including AIM and ASK (at protein level).

It is found in the nucleus. Its function is as follows. Transcription factor that binds to the promoter of target genes. Regulates fate specification and/or differentiation of multiple cell types arising from the embryonic mesodermal (M) lineage and the ABp(l/r)paa precursors. In the postembryonic M lineage, regulates cleavage orientation, cell proliferation and cell fate specification. Regulates hlh-1 expression to specify coelomocyte fate in the mesodermal (M) lineage. In AWC neurons, initiates expression of ceh-36, leading to the expression of terminal differentiation genes. Regulates ventral cephalic sheath (CEPsh) glia differentiation and expression of transcription factor hlh-17 in CEPsh glia. Promotes terminal differentiation and morphogenesis of the epithelial duct and pore cells. In the duct cell, cooperates with the EGF-Ras-ERK pathway in turning on the terminal differentiation gene lin-48. The chain is Homeobox protein mls-2 from Caenorhabditis elegans.